Consider the following 126-residue polypeptide: Small ribosomal subunit protein bS16 (126 aa).

Residues 87-126 form a disordered region; the sequence is ARSNPEKALPGKRALERVAEKKQKAEDAAAAAAAEASAAE. A compositionally biased stretch (basic and acidic residues) spans 99 to 113; sequence RALERVAEKKQKAED. Low complexity predominate over residues 114 to 126; that stretch reads AAAAAAAEASAAE.

The protein belongs to the bacterial ribosomal protein bS16 family.

The sequence is that of Small ribosomal subunit protein bS16 from Agrobacterium fabrum (strain C58 / ATCC 33970) (Agrobacterium tumefaciens (strain C58)).